Here is a 122-residue protein sequence, read N- to C-terminus: MADLNAIVDQLSSLTVLEAAELVKQLESKWGVSAAAVAVAAGPAAAAAPVEEKTEFTVVLANAGANKINVIKEIRAITGLGLKEAKDLVEGAPKNVKEGVNKDDAKKIKDQLTAAGATVDIK.

The protein belongs to the bacterial ribosomal protein bL12 family. Homodimer. Part of the ribosomal stalk of the 50S ribosomal subunit. Forms a multimeric L10(L12)X complex, where L10 forms an elongated spine to which 2 to 4 L12 dimers bind in a sequential fashion. Binds GTP-bound translation factors.

Functionally, forms part of the ribosomal stalk which helps the ribosome interact with GTP-bound translation factors. Is thus essential for accurate translation. This Myxococcus xanthus (strain DK1622) protein is Large ribosomal subunit protein bL12.